The following is a 446-amino-acid chain: tRNA modification GTPase MnmE (446 aa).

(6S)-5-formyl-5,6,7,8-tetrahydrofolate-binding residues include arginine 24, glutamate 81, and lysine 120. In terms of domain architecture, TrmE-type G spans 216 to 368 (GLHAVLIGPP…LHIRLRELAL (153 aa)). Position 226 (asparagine 226) interacts with K(+). GTP-binding positions include 226-231 (NAGKSS), 245-251 (TDVAGTT), and 270-273 (DTAG). A Mg(2+)-binding site is contributed by serine 230. Threonine 245, valine 247, and threonine 250 together coordinate K(+). A Mg(2+)-binding site is contributed by threonine 251. Lysine 446 contributes to the (6S)-5-formyl-5,6,7,8-tetrahydrofolate binding site.

Belongs to the TRAFAC class TrmE-Era-EngA-EngB-Septin-like GTPase superfamily. TrmE GTPase family. In terms of assembly, homodimer. Heterotetramer of two MnmE and two MnmG subunits. K(+) is required as a cofactor.

It localises to the cytoplasm. Exhibits a very high intrinsic GTPase hydrolysis rate. Involved in the addition of a carboxymethylaminomethyl (cmnm) group at the wobble position (U34) of certain tRNAs, forming tRNA-cmnm(5)s(2)U34. This is tRNA modification GTPase MnmE from Xanthomonas oryzae pv. oryzae (strain MAFF 311018).